A 393-amino-acid polypeptide reads, in one-letter code: Myb-related transcription factor, partner of profilin (393 aa).

Residues 1–11 (MASATAAAAPG) show a composition bias toward low complexity. Residues 1–21 (MASATAAAAPGEAEETTRLRK) form a disordered region. Residues 16-88 (TTRLRKPRFS…EVQKRWNDFK (73 aa)) enclose the Myb-like domain. The Nuclear localization signal motif lies at 87-90 (FKRR). Disordered regions lie at residues 125 to 254 (GPGV…EQSL), 290 to 323 (PLLPGTPADPLPPPPPPPPPPPPKPVLPPSAPKV), and 348 to 393 (IISP…WKSP). Residues 142–157 (AAASSQPQASTASTQR) are compositionally biased toward low complexity. Basic and acidic residues predominate over residues 160-171 (LSEDRRQDRRAD). The span at 173–184 (PAQSKGGSSSPE) shows a compositional bias: polar residues. 4 stretches are compositionally biased toward pro residues: residues 219 to 229 (PPLPAPPPPPT), 238 to 247 (SPSPTPPRPT), 296 to 320 (PADPLPPPPPPPPPPPPKPVLPPSA), and 359 to 368 (KPLPPAPPLP). The segment covering 375–393 (HKRRKGFPTRKRRGRWKSP) has biased composition (basic residues). 2 consecutive short sequence motifs (nuclear localization signal) follow at residues 376–379 (KRRK) and 384–387 (RKRR).

Interacts with PFN1. Homodimer and heterodimer with PFN1. In terms of tissue distribution, ubiquitous. Highly expressed in brain, liver and testis. Moderate expression in heart, lung and skeletal muscle. Low expression in spleen and kidney.

It localises to the nucleus. Its function is as follows. Transcriptional repressor; DNA-binding protein that specifically recognizes the core sequence 5'-YAAC[GT]G-3'. Dimerization with PFN1 reduces its DNA-binding capacity. This chain is Myb-related transcription factor, partner of profilin (Mypop), found in Mus musculus (Mouse).